The primary structure comprises 444 residues: Na(+)-translocating NADH-quinone reductase subunit A (444 aa).

Belongs to the NqrA family. As to quaternary structure, composed of six subunits; NqrA, NqrB, NqrC, NqrD, NqrE and NqrF.

The enzyme catalyses a ubiquinone + n Na(+)(in) + NADH + H(+) = a ubiquinol + n Na(+)(out) + NAD(+). Functionally, NQR complex catalyzes the reduction of ubiquinone-1 to ubiquinol by two successive reactions, coupled with the transport of Na(+) ions from the cytoplasm to the periplasm. NqrA to NqrE are probably involved in the second step, the conversion of ubisemiquinone to ubiquinol. This Shewanella amazonensis (strain ATCC BAA-1098 / SB2B) protein is Na(+)-translocating NADH-quinone reductase subunit A.